Reading from the N-terminus, the 339-residue chain is Phenylalanine--tRNA ligase alpha subunit (339 aa).

Residue glutamate 254 participates in Mg(2+) binding.

Belongs to the class-II aminoacyl-tRNA synthetase family. Phe-tRNA synthetase alpha subunit type 1 subfamily. In terms of assembly, tetramer of two alpha and two beta subunits. It depends on Mg(2+) as a cofactor.

The protein localises to the cytoplasm. It catalyses the reaction tRNA(Phe) + L-phenylalanine + ATP = L-phenylalanyl-tRNA(Phe) + AMP + diphosphate + H(+). In Clostridium botulinum (strain 657 / Type Ba4), this protein is Phenylalanine--tRNA ligase alpha subunit.